The chain runs to 374 residues: tRNA-specific 2-thiouridylase MnmA (374 aa).

Residues 12-19 (GMSGGVDS) and methionine 38 each bind ATP. The interaction with target base in tRNA stretch occupies residues 98–100 (NPD). The Nucleophile role is filled by cysteine 103. A disulfide bond links cysteine 103 and cysteine 202. Glycine 128 contributes to the ATP binding site. Residues 152–154 (KDQ) are interaction with tRNA. Cysteine 202 acts as the Cysteine persulfide intermediate in catalysis. The tract at residues 316–317 (RY) is interaction with tRNA.

The protein belongs to the MnmA/TRMU family.

It is found in the cytoplasm. It carries out the reaction S-sulfanyl-L-cysteinyl-[protein] + uridine(34) in tRNA + AH2 + ATP = 2-thiouridine(34) in tRNA + L-cysteinyl-[protein] + A + AMP + diphosphate + H(+). Catalyzes the 2-thiolation of uridine at the wobble position (U34) of tRNA, leading to the formation of s(2)U34. This chain is tRNA-specific 2-thiouridylase MnmA, found in Vibrio parahaemolyticus serotype O3:K6 (strain RIMD 2210633).